The primary structure comprises 458 residues: ATP synthase subunit beta (458 aa).

Residue 148–155 coordinates ATP; sequence GGAGVGKT.

It belongs to the ATPase alpha/beta chains family. In terms of assembly, F-type ATPases have 2 components, CF(1) - the catalytic core - and CF(0) - the membrane proton channel. CF(1) has five subunits: alpha(3), beta(3), gamma(1), delta(1), epsilon(1). CF(0) has three main subunits: a(1), b(2) and c(9-12). The alpha and beta chains form an alternating ring which encloses part of the gamma chain. CF(1) is attached to CF(0) by a central stalk formed by the gamma and epsilon chains, while a peripheral stalk is formed by the delta and b chains.

Its subcellular location is the cell inner membrane. The catalysed reaction is ATP + H2O + 4 H(+)(in) = ADP + phosphate + 5 H(+)(out). Functionally, produces ATP from ADP in the presence of a proton gradient across the membrane. The catalytic sites are hosted primarily by the beta subunits. The sequence is that of ATP synthase subunit beta from Laribacter hongkongensis (strain HLHK9).